The sequence spans 180 residues: MASYLAEEYKETVAPALKEKFNYTSSMQIPKIDKIVLNMGVGDAVSNAKNLDEAVEELTLISGQKPLITKAKKSIANFRLREGMSIGAKVTLRGDRMYDFLYKLINVSLPRVRDFRGVSTRSFDGRGNYTLGIKEQLIFPEIDFDKVNRTRGLDIVIVTTADTDEEARELLSQFGMPFAR.

Belongs to the universal ribosomal protein uL5 family. Part of the 50S ribosomal subunit; part of the 5S rRNA/L5/L18/L25 subcomplex. Contacts the 5S rRNA and the P site tRNA. Forms a bridge to the 30S subunit in the 70S ribosome.

In terms of biological role, this is one of the proteins that bind and probably mediate the attachment of the 5S RNA into the large ribosomal subunit, where it forms part of the central protuberance. In the 70S ribosome it contacts protein S13 of the 30S subunit (bridge B1b), connecting the 2 subunits; this bridge is implicated in subunit movement. Contacts the P site tRNA; the 5S rRNA and some of its associated proteins might help stabilize positioning of ribosome-bound tRNAs. This Lactobacillus acidophilus (strain ATCC 700396 / NCK56 / N2 / NCFM) protein is Large ribosomal subunit protein uL5.